The primary structure comprises 220 residues: dITP/XTP pyrophosphatase (220 aa).

A substrate-binding site is contributed by 13-18 (SHNAGK). Mg(2+) is bound by residues D45 and D74. D74 serves as the catalytic Proton acceptor. Residues S75, 163–166 (FGYD), K186, and 199–200 (HR) contribute to the substrate site.

It belongs to the HAM1 NTPase family. As to quaternary structure, homodimer. Mg(2+) serves as cofactor.

It carries out the reaction XTP + H2O = XMP + diphosphate + H(+). The catalysed reaction is dITP + H2O = dIMP + diphosphate + H(+). The enzyme catalyses ITP + H2O = IMP + diphosphate + H(+). Functionally, pyrophosphatase that catalyzes the hydrolysis of nucleoside triphosphates to their monophosphate derivatives, with a high preference for the non-canonical purine nucleotides XTP (xanthosine triphosphate), dITP (deoxyinosine triphosphate) and ITP. Seems to function as a house-cleaning enzyme that removes non-canonical purine nucleotides from the nucleotide pool, thus preventing their incorporation into DNA/RNA and avoiding chromosomal lesions. This Brucella melitensis biotype 1 (strain ATCC 23456 / CCUG 17765 / NCTC 10094 / 16M) protein is dITP/XTP pyrophosphatase.